We begin with the raw amino-acid sequence, 160 residues long: MRLVVIAVGRLKQGPERELADRYRGRFADIGRNLGFRGLDVHEVAESRARDAGQRIREEAAAVLALAPKEMILVALDEKGKSIDSAAFAEHLGRWRDESVADAVFMIGGADGLSPELRRRARLSVAFGAATWPHQMVRVMLLEQIYRAATILAGHPYHRG.

2 residues coordinate S-adenosyl-L-methionine: Leu-76 and Gly-108.

The protein belongs to the RNA methyltransferase RlmH family. In terms of assembly, homodimer.

It is found in the cytoplasm. It catalyses the reaction pseudouridine(1915) in 23S rRNA + S-adenosyl-L-methionine = N(3)-methylpseudouridine(1915) in 23S rRNA + S-adenosyl-L-homocysteine + H(+). Specifically methylates the pseudouridine at position 1915 (m3Psi1915) in 23S rRNA. This is Ribosomal RNA large subunit methyltransferase H from Nitrobacter winogradskyi (strain ATCC 25391 / DSM 10237 / CIP 104748 / NCIMB 11846 / Nb-255).